The following is a 386-amino-acid chain: Putative nickel insertion protein (386 aa).

Belongs to the LarC family.

The polypeptide is Putative nickel insertion protein (Dictyoglomus thermophilum (strain ATCC 35947 / DSM 3960 / H-6-12)).